Here is a 299-residue protein sequence, read N- to C-terminus: Zinc import ATP-binding protein ZnuC (299 aa).

Positions 13–228 (VSLANAGVQR…PEYMRLFGGT (216 aa)) constitute an ABC transporter domain. Residue 45–52 (GPNGSGKS) coordinates ATP.

It belongs to the ABC transporter superfamily. Zinc importer (TC 3.A.1.15.5) family. As to quaternary structure, the complex is composed of two ATP-binding proteins (ZnuC), two transmembrane proteins (ZnuB) and a solute-binding protein (ZnuA).

Its subcellular location is the cell inner membrane. It carries out the reaction Zn(2+)(out) + ATP(in) + H2O(in) = Zn(2+)(in) + ADP(in) + phosphate(in) + H(+)(in). In terms of biological role, part of the ABC transporter complex ZnuABC involved in zinc import. Responsible for energy coupling to the transport system. In Agrobacterium fabrum (strain C58 / ATCC 33970) (Agrobacterium tumefaciens (strain C58)), this protein is Zinc import ATP-binding protein ZnuC.